Reading from the N-terminus, the 4377-residue chain is Ankyrin-3 (4377 aa).

Positions 1 to 44 (MAHAASQLKKNRDLEINAEEEPEKKRKHRKRSRDRKKKSDANAS) are disordered. Residues 25–38 (KRKHRKRSRDRKKK) show a composition bias toward basic residues. Position 39 is a phosphoserine (Ser39). ANK repeat units follow at residues 73-102 (NGLN…NVDA), 106-135 (KGNT…NVNA), 139-168 (NGFT…SQSL), 172-201 (DGFT…KGKV), 203-230 (LPAL…NADV), 234-263 (SGFT…AVDF), 267-296 (NDIT…KIDA), 300-329 (DGLT…PILS), 333-362 (NGLS…PVDD), 366-395 (DYLT…NPNA), 399-428 (NGFT…SIQA), 432-461 (SGLT…SPNT), 465-494 (RGET…QVEA), 498-527 (DDQT…SPNA), 531-560 (SGYT…SLSI), 564-593 (KGFT…SPDA), 597-626 (SGLT…SPHA), 630-659 (NGYT…DANA), 663-692 (QGIA…NVNL), 696-725 (SGLT…HVDA), 729-758 (MGYT…KVNA), 762-791 (NGYT…SPNE), and 795-825 (NGNT…TMTT). Thr468 bears the Phosphoserine mark. Ser623 bears the Phosphoserine mark. 2 positions are modified to phosphoserine: Thr765 and Glu791. A phosphoserine mark is found at Ser847, Ser861, Ser867, Ser913, Ser916, Ser922, Ser957, Ser959, and Ser1113. ZU5 domains follow at residues 984–1139 (FLVS…VVSR) and 1141–1288 (KQES…LADC). Residues 1273–1407 (VSFTTNVSAR…SIKIRDTSQE (135 aa)) form a UPA domain region. Residues Ser1445, Ser1459, and Ser1470 each carry the phosphoserine modification. The segment covering 1519–1539 (SGFTSLSSSSSNTPSASPLKS) has biased composition (low complexity). The interval 1519-1540 (SGFTSLSSSSSNTPSASPLKSI) is disordered. A phosphoserine mark is found at Ser1622, Ser1625, Ser1632, Ile1651, Leu1658, Ser1984, Ser2111, Ser2123, and Ser2126. Disordered stretches follow at residues 1968–1987 (VDNK…SPED), 2107–2159 (TILE…VPIP), 2176–2245 (YDPS…EETH), 2299–2322 (AVSP…DNQM), 2383–2433 (FPCS…ISDD), 2474–2508 (DVSH…KIAT), 2588–2751 (LTEV…VKKI), 2795–2824 (QSNE…MPDS), 3036–3067 (PPLE…DVFD), 3131–3272 (TFYT…KKHH), 3298–3516 (PVIR…SVFP), 3538–3607 (KGLD…HEGK), 3635–3718 (GEHT…DPKL), 3868–3897 (KATS…QSEK), and 4019–4090 (KKMQ…CERT). Residues 1977-1986 (PKSDKGHSPE) are compositionally biased toward basic and acidic residues. Residues 2115–2136 (FSQHDQDKSPLSDSGFETRSEK) show a composition bias toward basic and acidic residues. Over residues 2137–2146 (TPSAPQSAES) the composition is skewed to polar residues. Residues 2299–2308 (AVSPDVHKSA) are compositionally biased toward basic and acidic residues. Residues 2390–2399 (GQQEEEELTA) show a composition bias toward acidic residues. Polar residues predominate over residues 2407–2417 (LESSRVNTPVS). Composition is skewed to basic and acidic residues over residues 2497-2508 (GSDKRSREKIAT) and 2588-2612 (LTEV…PEKK). The span at 2622–2631 (SSQSPTSSSP) shows a compositional bias: low complexity. Residues 2706 to 2716 (SGFQLKQSKLS) show a composition bias toward polar residues. Residues 2720-2742 (LKFEQGTHAKSKDMSQEDRKSDG) are compositionally biased toward basic and acidic residues. The span at 2796–2807 (SNEIVVNDSGSD) shows a compositional bias: polar residues. Composition is skewed to polar residues over residues 3154 to 3186 (EQVS…SKTP) and 3214 to 3224 (KSTSLKQTTVE). Basic and acidic residues-rich tracts occupy residues 3227–3242 (AVER…DSNQ) and 3335–3361 (KLKE…KELE). Positions 3377-3402 (SPQNEIAQNGNNDQSITECSIATTAE) are enriched in polar residues. Residues 3409–3428 (ATEIDSLDGYDLQDEDDGLT) show a composition bias toward acidic residues. Composition is skewed to basic and acidic residues over residues 3465–3481 (EVIE…DKPP) and 3549–3575 (RGDD…EDRS). The span at 3576–3598 (PATTPDTTPARTPTDESTPTSEP) shows a compositional bias: low complexity. Residues 3637-3651 (HTSEGKSGDQGEGDK) are compositionally biased toward basic and acidic residues. 4 stretches are compositionally biased toward polar residues: residues 3654–3669 (VTAT…TVET), 3676–3713 (ETPT…NTSK), 3880–3897 (HMSN…QSEK), and 4033–4052 (SRNT…VTTK). Residues 4053–4076 (SARDKKTEAAPLKSKSEKAGSEKR) show a composition bias toward basic and acidic residues. Residues 4090-4174 (TDIRMAIVAD…DIVTLLEGPI (85 aa)) form the Death domain. Residues Ser4211 and Ser4229 each carry the phosphoserine modification. Disordered stretches follow at residues 4251–4298 (NGSH…EPAS) and 4323–4377 (PVSM…KSHS). Polar residues predominate over residues 4268-4277 (PESQNDVGKQ). A phosphoserine mark is found at Ser4290 and Ser4298. Basic and acidic residues predominate over residues 4337-4347 (GKPRLSLHEEE). Position 4350 is a phosphoserine (Ser4350). A compositionally biased stretch (basic residues) spans 4362-4377 (VKTKKEIRHVEKKSHS).

Directly interacts with DMD and betaDAG1. This interaction does not interfere with binding between DMD and betaDAG1. It is also required for DMD and betaDAG1 retention at costameres. Interacts (via N-terminal ANK repeats) with SCHIP1 isoform 5 (via C-terminus); this interaction is required for the localization at axon initial segments (AISs) and nodes of Ranvier (NRs). May be a constituent of a NFASC/NRCAM/ankyrin G complex. Interacts with RHBG. Interacts with PLEC and FLNC. Interacts with KCNA1; this inhibits channel activity. Interacts (via ANK repeats) with IQCJ-SCHIP1; required for IQCJ-SCHIP1 localization at axon initial segments (AIS) and nodes of Ranvier. Interacts with SCHIP1. Interacts with SCN5A. Interacts with PKP2 and GJA1/CX43. Expressed in brain, neurons, muscles and other tissues.

Its subcellular location is the cytoplasm. It is found in the cytoskeleton. It localises to the cell projection. The protein resides in the axon. The protein localises to the cell membrane. Its subcellular location is the sarcolemma. It is found in the postsynaptic cell membrane. It localises to the lysosome. The protein resides in the T-tubule. The protein localises to the golgi apparatus. In terms of biological role, membrane-cytoskeleton linker. May participate in the maintenance/targeting of ion channels and cell adhesion molecules at the nodes of Ranvier and axonal initial segments. In skeletal muscle, required for costamere localization of DMD and betaDAG1. Regulates KCNA1 channel activity in function of dietary Mg(2+) levels, and thereby contributes to the regulation of renal Mg(2+) reabsorption. Required for intracellular adhesion and junctional conductance in myocytes, potentially via stabilization of GJA1/CX43 protein abundance and promotion of PKP2, GJA1/CX43, and SCN5A/Nav1.5 localization to cell-cell junctions. Functionally, may be part of a Golgi-specific membrane cytoskeleton in association with beta-spectrin. The chain is Ankyrin-3 from Homo sapiens (Human).